The following is a 411-amino-acid chain: MKEVLRKVKDASRVTATLNGEIKRKILKEMAEALEQNSSLIINENKKDLKYANENNLSAALIDRLYLDEKRIGSMADALRDIATLKDPVGRVIDGWMLDNGLRIEKVKIPIGVIGIIYESRPNVTSDAAGLCFMSGNACILKGGKEAMYSNIAIINVLRDVLERNSLPKDAVSLLPDYSREGVYKLIQEDKYVDLIIPRGGEKLIKFVSENSKVPVVKHDKGLCHIYIHKDANIDEAVKISVNAKVQRPGVCNAVETLLVDESVKNEILPKLKAEMEKEGVELRGCEKTLEVIDINKATEEDWNTEYLDKILSIKVVRDLNEAIEHIQTYGSGHSDSIITENYSASEEFLNRVDSACVYVNASTRFTDGGEFGFGAEVGISTNKLHARGPMGIDDLTTYKYKIYGNGQIRE.

Belongs to the gamma-glutamyl phosphate reductase family.

It localises to the cytoplasm. The enzyme catalyses L-glutamate 5-semialdehyde + phosphate + NADP(+) = L-glutamyl 5-phosphate + NADPH + H(+). The protein operates within amino-acid biosynthesis; L-proline biosynthesis; L-glutamate 5-semialdehyde from L-glutamate: step 2/2. In terms of biological role, catalyzes the NADPH-dependent reduction of L-glutamate 5-phosphate into L-glutamate 5-semialdehyde and phosphate. The product spontaneously undergoes cyclization to form 1-pyrroline-5-carboxylate. In Nautilia profundicola (strain ATCC BAA-1463 / DSM 18972 / AmH), this protein is Gamma-glutamyl phosphate reductase.